Reading from the N-terminus, the 230-residue chain is Isoprenyl transferase (230 aa).

D14 is an active-site residue. A Mg(2+)-binding site is contributed by D14. Substrate is bound by residues 15-18, W19, R27, H31, and 59-61; these read GNGR and STE. N62 serves as the catalytic Proton acceptor. Substrate contacts are provided by residues W63, R65, R175, and 181-183; that span reads RIS. Residue E194 participates in Mg(2+) binding.

This sequence belongs to the UPP synthase family. As to quaternary structure, homodimer. It depends on Mg(2+) as a cofactor.

Functionally, catalyzes the condensation of isopentenyl diphosphate (IPP) with allylic pyrophosphates generating different type of terpenoids. This chain is Isoprenyl transferase, found in Fusobacterium nucleatum subsp. nucleatum (strain ATCC 25586 / DSM 15643 / BCRC 10681 / CIP 101130 / JCM 8532 / KCTC 2640 / LMG 13131 / VPI 4355).